The sequence spans 629 residues: Endoglucanase 15 (629 aa).

Positions 1 to 30 are cleaved as a signal peptide; the sequence is MAKNGGAHGAATLFGLLALASMVKLGFVAG. The active-site Nucleophile is aspartate 87. Active-site residues include histidine 421, aspartate 473, and glutamate 482. 3 N-linked (GlcNAc...) asparagine glycosylation sites follow: asparagine 520, asparagine 540, and asparagine 561.

The protein belongs to the glycosyl hydrolase 9 (cellulase E) family.

It is found in the secreted. The enzyme catalyses Endohydrolysis of (1-&gt;4)-beta-D-glucosidic linkages in cellulose, lichenin and cereal beta-D-glucans.. This is Endoglucanase 15 from Oryza sativa subsp. japonica (Rice).